The following is a 162-amino-acid chain: NADH-quinone oxidoreductase subunit I (162 aa).

2 consecutive 4Fe-4S ferredoxin-type domains span residues 53 to 83 and 93 to 122; these read LRRY…IEAE and TRYD…EGPN. Residues cysteine 63, cysteine 66, cysteine 69, cysteine 73, cysteine 102, cysteine 105, cysteine 108, and cysteine 112 each contribute to the [4Fe-4S] cluster site.

The protein belongs to the complex I 23 kDa subunit family. In terms of assembly, NDH-1 is composed of 14 different subunits. Subunits NuoA, H, J, K, L, M, N constitute the membrane sector of the complex. Requires [4Fe-4S] cluster as cofactor.

It is found in the cell inner membrane. The enzyme catalyses a quinone + NADH + 5 H(+)(in) = a quinol + NAD(+) + 4 H(+)(out). NDH-1 shuttles electrons from NADH, via FMN and iron-sulfur (Fe-S) centers, to quinones in the respiratory chain. The immediate electron acceptor for the enzyme in this species is believed to be ubiquinone. Couples the redox reaction to proton translocation (for every two electrons transferred, four hydrogen ions are translocated across the cytoplasmic membrane), and thus conserves the redox energy in a proton gradient. The chain is NADH-quinone oxidoreductase subunit I from Rhodospirillum rubrum (strain ATCC 11170 / ATH 1.1.1 / DSM 467 / LMG 4362 / NCIMB 8255 / S1).